Consider the following 449-residue polypeptide: Sensor protein QseC (449 aa).

Over 1-12 the chain is Cytoplasmic; that stretch reads MKFTQRLSLRVR. The chain crosses the membrane as a helical span at residues 13 to 33; that stretch reads LTLIFLILASVTWLLSSFVAW. Over 34 to 156 the chain is Periplasmic; that stretch reads KQTTDNVDEL…QEWEYREDMA (123 aa). The helical transmembrane segment at 157–177 threads the bilayer; the sequence is LAIVAGQLIPWLVALPVMLII. Over 178 to 449 the chain is Cytoplasmic; that stretch reads MMVLLGRELA…QGGFEAKVSW (272 aa). Residues 243 to 449 enclose the Histidine kinase domain; sequence DAAHELRSPL…QGGFEAKVSW (207 aa). Position 246 is a phosphohistidine; by autocatalysis (histidine 246).

It is found in the cell inner membrane. It carries out the reaction ATP + protein L-histidine = ADP + protein N-phospho-L-histidine.. Functionally, member of a two-component regulatory system QseB/QseC. Activates the flagella regulon by activating transcription of FlhDC. May activate QseB by phosphorylation. The protein is Sensor protein QseC (qseC) of Escherichia coli O157:H7.